Here is a 768-residue protein sequence, read N- to C-terminus: Protein ITPRID2 (768 aa).

Disordered regions lie at residues 1-24, 39-78, and 98-124; these read MTTEDHLLRTASQHSDSSGFAEDS, LQAMGSSADSCDSETTVTSLGEDLATPTAQDQPYFNESEE, and RKSGSQDFPQCNTIENPGTKQSTCSPG. Composition is skewed to polar residues over residues 39–57 and 102–122; these read LQAMGSSADSCDSETTVTS and SQDFPQCNTIENPGTKQSTCS. Phosphoserine is present on residues Ser153, Ser177, Ser246, Ser248, Ser255, Ser268, Ser276, and Ser312. The tract at residues 315–338 is disordered; it reads SVKKEEAPQSEAPRVEECHHGRTP. Over residues 316-334 the composition is skewed to basic and acidic residues; the sequence is VKKEEAPQSEAPRVEECHH. Lys317 participates in a covalent cross-link: Glycyl lysine isopeptide (Lys-Gly) (interchain with G-Cter in SUMO2). Phosphoserine is present on residues Ser378 and Ser411. Residues 468-546 adopt a coiled-coil conformation; the sequence is QELQVMRRSL…GLEEQLRAVR (79 aa). Residues Ser549, Ser564, Ser569, Ser572, Ser627, and Ser643 each carry the phosphoserine modification. 2 disordered regions span residues 605–647 and 663–718; these read IPPG…VGKP and ALTP…AAEE. Polar residues predominate over residues 610–627; sequence SSESVFSQATSESSSVCS. Thr665 is subject to Phosphothreonine. Positions 667–677 are enriched in polar residues; the sequence is TAPSRTGSVQT. Ser670 carries the post-translational modification Phosphoserine. Position 677 is a phosphothreonine (Thr677). Acidic residues predominate over residues 682–694; it reads ESSEEVDAAEEAP.

Its subcellular location is the cytoplasm. The protein is Protein ITPRID2 of Pongo abelii (Sumatran orangutan).